A 492-amino-acid polypeptide reads, in one-letter code: Differentially expressed in FDCP 8 homolog (492 aa).

Gly residues predominate over residues 38–51 (GLGGSGSTGSGSEA). The disordered stretch occupies residues 38–62 (GLGGSGSTGSGSEAGGSEESGPQGA). 2 consecutive Phorbol-ester/DAG-type zinc fingers follow at residues 161-214 (PHHG…KRVC) and 400-453 (DHIR…NMIC). Residues 468 to 492 (RMKSTEDDDDDDDGVATDDDVTAAE) are disordered. Acidic residues predominate over residues 473 to 492 (EDDDDDDDGVATDDDVTAAE).

It belongs to the DEF8 family.

In Drosophila melanogaster (Fruit fly), this protein is Differentially expressed in FDCP 8 homolog.